We begin with the raw amino-acid sequence, 1537 residues long: Isocyanide synthase-NRPS hybrid crmA (1537 aa).

An isocyanide synthase domain region spans residues 1 to 502 (MFHKEAGISH…CVKAGYAALF (502 aa)). Positions 351 to 391 (PSVPVSPGMSSPSAASTSSSGASMQGSAATTPETHSPPTFT) are disordered. A compositionally biased stretch (low complexity) spans 352 to 381 (SVPVSPGMSSPSAASTSSSGASMQGSAATT). Polar residues predominate over residues 382-391 (PETHSPPTFT). The adenylation stretch occupies residues 573-752 (EAINDPFCFL…GNLIPPREDW (180 aa)). The 79-residue stretch at 941-1019 (SSAHSIEDNV…RLSAIIALLA (79 aa)) folds into the Carrier domain. S977 is modified (O-(pantetheine 4'-phosphoryl)serine). The tract at residues 1293–1526 (RCLKTTMFLV…LEMLVTDEEF (234 aa)) is transferase.

The protein in the N-terminal section; belongs to the isocyanide synthase family. It in the C-terminal section; belongs to the NRP synthetase family.

It functions in the pathway secondary metabolite biosynthesis. Its function is as follows. Isocyanide synthase-NRPS hybrid; part of the crm gene cluster that mediates the biosynthesis of a yet unidentified copper-responsive metabolite. Converts valine into valine isocyanide that then contributes to two distinct biosynthetic pathways under copper-limiting conditions. Reaction of valine isocyanide with the imine intermediate of festuclavine results in formation of the amide bond in fumivaline A. In addition, valine isocyanide contributes to biosynthesis of a family of acylated sugar alcohols, the D-mannitol-derived fumicicolins. CrmA and associated products inhibit microbial growth from copper-starved A.fumigatus. The protein is Isocyanide synthase-NRPS hybrid crmA of Aspergillus fumigatus (strain ATCC MYA-4609 / CBS 101355 / FGSC A1100 / Af293) (Neosartorya fumigata).